A 262-amino-acid chain; its full sequence is Cytochrome c oxidase subunit 3 (262 aa).

7 consecutive transmembrane segments (helical) span residues Pro-16 to Phe-36, Thr-42 to Trp-59, Gly-83 to Phe-103, Phe-128 to Ala-148, Ser-163 to Ile-183, Phe-198 to Ile-218, and Ala-240 to Trp-260.

This sequence belongs to the cytochrome c oxidase subunit 3 family. As to quaternary structure, component of the cytochrome c oxidase (complex IV, CIV), a multisubunit enzyme composed of a catalytic core of 3 subunits and several supernumerary subunits. The complex exists as a monomer or a dimer and forms supercomplexes (SCs) in the inner mitochondrial membrane with ubiquinol-cytochrome c oxidoreductase (cytochrome b-c1 complex, complex III, CIII).

The protein localises to the mitochondrion inner membrane. It carries out the reaction 4 Fe(II)-[cytochrome c] + O2 + 8 H(+)(in) = 4 Fe(III)-[cytochrome c] + 2 H2O + 4 H(+)(out). In terms of biological role, component of the cytochrome c oxidase, the last enzyme in the mitochondrial electron transport chain which drives oxidative phosphorylation. The respiratory chain contains 3 multisubunit complexes succinate dehydrogenase (complex II, CII), ubiquinol-cytochrome c oxidoreductase (cytochrome b-c1 complex, complex III, CIII) and cytochrome c oxidase (complex IV, CIV), that cooperate to transfer electrons derived from NADH and succinate to molecular oxygen, creating an electrochemical gradient over the inner membrane that drives transmembrane transport and the ATP synthase. Cytochrome c oxidase is the component of the respiratory chain that catalyzes the reduction of oxygen to water. Electrons originating from reduced cytochrome c in the intermembrane space (IMS) are transferred via the dinuclear copper A center (CU(A)) of subunit 2 and heme A of subunit 1 to the active site in subunit 1, a binuclear center (BNC) formed by heme A3 and copper B (CU(B)). The BNC reduces molecular oxygen to 2 water molecules using 4 electrons from cytochrome c in the IMS and 4 protons from the mitochondrial matrix. The sequence is that of Cytochrome c oxidase subunit 3 from Aedes aegypti (Yellowfever mosquito).